The chain runs to 251 residues: uncharacterized protein (251 aa).

The RING-type zinc-finger motif lies at 192 to 238; it reads CMMCVQRGDERVAITTPYTTDCGHTYCYACIMSRLKLVNNVSCPICK.

The protein localises to the cytoplasm. This is an uncharacterized protein from Schizosaccharomyces pombe (strain 972 / ATCC 24843) (Fission yeast).